The chain runs to 302 residues: Methionyl-tRNA formyltransferase (302 aa).

109 to 112 (SILP) is a binding site for (6S)-5,6,7,8-tetrahydrofolate.

This sequence belongs to the Fmt family.

It carries out the reaction L-methionyl-tRNA(fMet) + (6R)-10-formyltetrahydrofolate = N-formyl-L-methionyl-tRNA(fMet) + (6S)-5,6,7,8-tetrahydrofolate + H(+). Its function is as follows. Attaches a formyl group to the free amino group of methionyl-tRNA(fMet). The formyl group appears to play a dual role in the initiator identity of N-formylmethionyl-tRNA by promoting its recognition by IF2 and preventing the misappropriation of this tRNA by the elongation apparatus. This chain is Methionyl-tRNA formyltransferase, found in Campylobacter hominis (strain ATCC BAA-381 / DSM 21671 / CCUG 45161 / LMG 19568 / NCTC 13146 / CH001A).